A 455-amino-acid chain; its full sequence is Chromosomal replication initiator protein DnaA (455 aa).

Residues 1–75 are domain I, interacts with DnaA modulators; it reads MDTNNNIEKE…EILSQNKVGM (75 aa). The interval 75–106 is domain II; it reads MHLAHSVDVRIEVAPKIQINAQANINYKAIKT. Residues 107–321 form a domain III, AAA+ region region; the sequence is SVKDSYTFEN…GAIIKISVNA (215 aa). ATP-binding residues include Gly151, Gly153, Lys154, and Thr155. The domain IV, binds dsDNA stretch occupies residues 322-455; the sequence is NLMNAPIDLN…DKKTAFNSSE (134 aa).

Belongs to the DnaA family. In terms of assembly, oligomerizes as a right-handed, spiral filament on DNA at oriC.

It localises to the cytoplasm. Its function is as follows. Plays an essential role in the initiation and regulation of chromosomal replication. ATP-DnaA binds to the origin of replication (oriC) to initiate formation of the DNA replication initiation complex once per cell cycle. Binds the DnaA box (a 9 base pair repeat at the origin) and separates the double-stranded (ds)DNA. Forms a right-handed helical filament on oriC DNA; dsDNA binds to the exterior of the filament while single-stranded (ss)DNA is stabiized in the filament's interior. The ATP-DnaA-oriC complex binds and stabilizes one strand of the AT-rich DNA unwinding element (DUE), permitting loading of DNA polymerase. After initiation quickly degrades to an ADP-DnaA complex that is not apt for DNA replication. Binds acidic phospholipids. The protein is Chromosomal replication initiator protein DnaA of Helicobacter pylori (strain G27).